Consider the following 230-residue polypeptide: Cytochrome c oxidase subunit 2 (230 aa).

Residues 1 to 14 (MAYPLQLGFQDATS) are Mitochondrial intermembrane-facing. A helical membrane pass occupies residues 15 to 45 (PIMEELLHFHDHTLMIVFLISSLVLYIISTM). The Mitochondrial matrix segment spans residues 46–59 (LTTKLTHTNTMDAQ). The helical transmembrane segment at 60 to 87 (EVETIWTILPAIILILIALPSLRILYMM) threads the bilayer. Residues 88–230 (DEINNPNLTI…NWTSSMMSTS (143 aa)) are Mitochondrial intermembrane-facing. Cu cation is bound by residues His161, Cys196, Glu198, Cys200, His204, and Met207. Glu198 contributes to the Mg(2+) binding site. Tyr218 carries the phosphotyrosine modification.

This sequence belongs to the cytochrome c oxidase subunit 2 family. As to quaternary structure, component of the cytochrome c oxidase (complex IV, CIV), a multisubunit enzyme composed of 14 subunits. The complex is composed of a catalytic core of 3 subunits MT-CO1, MT-CO2 and MT-CO3, encoded in the mitochondrial DNA, and 11 supernumerary subunits COX4I, COX5A, COX5B, COX6A, COX6B, COX6C, COX7A, COX7B, COX7C, COX8 and NDUFA4, which are encoded in the nuclear genome. The complex exists as a monomer or a dimer and forms supercomplexes (SCs) in the inner mitochondrial membrane with NADH-ubiquinone oxidoreductase (complex I, CI) and ubiquinol-cytochrome c oxidoreductase (cytochrome b-c1 complex, complex III, CIII), resulting in different assemblies (supercomplex SCI(1)III(2)IV(1) and megacomplex MCI(2)III(2)IV(2)). Found in a complex with TMEM177, COA6, COX18, COX20, SCO1 and SCO2. Interacts with TMEM177 in a COX20-dependent manner. Interacts with COX20. Interacts with COX16. Cu cation is required as a cofactor.

The protein localises to the mitochondrion inner membrane. The catalysed reaction is 4 Fe(II)-[cytochrome c] + O2 + 8 H(+)(in) = 4 Fe(III)-[cytochrome c] + 2 H2O + 4 H(+)(out). Functionally, component of the cytochrome c oxidase, the last enzyme in the mitochondrial electron transport chain which drives oxidative phosphorylation. The respiratory chain contains 3 multisubunit complexes succinate dehydrogenase (complex II, CII), ubiquinol-cytochrome c oxidoreductase (cytochrome b-c1 complex, complex III, CIII) and cytochrome c oxidase (complex IV, CIV), that cooperate to transfer electrons derived from NADH and succinate to molecular oxygen, creating an electrochemical gradient over the inner membrane that drives transmembrane transport and the ATP synthase. Cytochrome c oxidase is the component of the respiratory chain that catalyzes the reduction of oxygen to water. Electrons originating from reduced cytochrome c in the intermembrane space (IMS) are transferred via the dinuclear copper A center (CU(A)) of subunit 2 and heme A of subunit 1 to the active site in subunit 1, a binuclear center (BNC) formed by heme A3 and copper B (CU(B)). The BNC reduces molecular oxygen to 2 water molecules using 4 electrons from cytochrome c in the IMS and 4 protons from the mitochondrial matrix. This is Cytochrome c oxidase subunit 2 (MT-CO2) from Ornithorhynchus anatinus (Duckbill platypus).